The sequence spans 296 residues: Cobalamin trafficking protein CblD (296 aa).

Residues 1-38 (MAHVLCNRARLVSYLPGFCSLVKRVINPRAFSTAGSSG) constitute a mitochondrion transit peptide. Lys-203 carries the N6-acetyllysine modification.

As to quaternary structure, heterodimer with MMACHC. Forms a multiprotein complex with MMACHC, MTR and MTRR.

The protein localises to the cytoplasm. It is found in the mitochondrion. Functionally, involved in cobalamin metabolism and trafficking. Plays a role in regulating the biosynthesis and the proportion of two coenzymes, methylcob(III)alamin (MeCbl) and 5'-deoxyadenosylcobalamin (AdoCbl). Promotes oxidation of cob(II)alamin bound to MMACHC. The processing of cobalamin in the cytosol occurs in a multiprotein complex composed of at least MMACHC, MMADHC, MTRR (methionine synthase reductase) and MTR (methionine synthase) which may contribute to shuttle safely and efficiently cobalamin towards MTR in order to produce methionine. The chain is Cobalamin trafficking protein CblD (Mmadhc) from Rattus norvegicus (Rat).